The chain runs to 80 residues: Conotoxin Cl10.1 (80 aa).

A signal peptide spans 1-20 (MTTLGMTMLVLLLLLPLATC). The propeptide occupies 21–36 (LGDGERSPWDSLLRAL).

In terms of processing, contains 4 disulfide bonds. Expressed by the venom duct.

It is found in the secreted. The polypeptide is Conotoxin Cl10.1 (Californiconus californicus (California cone)).